A 182-amino-acid polypeptide reads, in one-letter code: ADP-ribosylation factor 1 (182 aa).

Residue glycine 2 is the site of N-myristoyl glycine attachment. Residues 24–31 (GLDAAGKT), 67–71 (DVGGQ), and 126–129 (NKQD) each bind GTP.

The protein belongs to the small GTPase superfamily. Arf family.

The protein localises to the golgi apparatus. The enzyme catalyses GTP + H2O = GDP + phosphate + H(+). Functionally, GTP-binding protein involved in protein trafficking; may modulate vesicle budding and uncoating within the Golgi apparatus. The chain is ADP-ribosylation factor 1 (arfA) from Dictyostelium discoideum (Social amoeba).